Reading from the N-terminus, the 458-residue chain is Monomethylamine methyltransferase MtmB (458 aa).

Position 202 (pyrrolysine 202) is a non-standard amino acid, pyrrolysine.

It belongs to the monomethylamine methyltransferase family. As to quaternary structure, can form a complex with MtmC.

The enzyme catalyses Co(I)-[methylamine-specific corrinoid protein] + methylamine + H(+) = methyl-Co(III)-[methylamine-specific corrinoid protein] + NH4(+). It participates in one-carbon metabolism; methanogenesis from methylamine. Catalyzes the transfer of the methyl group from monomethylamine to the corrinoid cofactor of MtmC. This is Monomethylamine methyltransferase MtmB (mtmB1) from Methanosarcina mazei (strain ATCC BAA-159 / DSM 3647 / Goe1 / Go1 / JCM 11833 / OCM 88) (Methanosarcina frisia).